We begin with the raw amino-acid sequence, 488 residues long: uncharacterized protein (488 aa).

Belongs to the protein kinase superfamily. ADCK protein kinase family.

This is an uncharacterized protein from Mycobacterium tuberculosis (strain CDC 1551 / Oshkosh).